A 197-amino-acid chain; its full sequence is Nucleoid occlusion factor SlmA (197 aa).

One can recognise an HTH tetR-type domain in the interval 7–67 (INRREHILQC…GLIEFIEESL (61 aa)). Positions 30-49 (TTAKLASEVGVSEAALYRHF) form a DNA-binding region, H-T-H motif.

This sequence belongs to the nucleoid occlusion factor SlmA family. Homodimer. Interacts with FtsZ.

The protein resides in the cytoplasm. It is found in the nucleoid. In terms of biological role, required for nucleoid occlusion (NO) phenomenon, which prevents Z-ring formation and cell division over the nucleoid. Acts as a DNA-associated cell division inhibitor that binds simultaneously chromosomal DNA and FtsZ, and disrupts the assembly of FtsZ polymers. SlmA-DNA-binding sequences (SBS) are dispersed on non-Ter regions of the chromosome, preventing FtsZ polymerization at these regions. This is Nucleoid occlusion factor SlmA from Shewanella sp. (strain MR-7).